Reading from the N-terminus, the 687-residue chain is Glycine--tRNA ligase beta subunit (687 aa).

It belongs to the class-II aminoacyl-tRNA synthetase family. In terms of assembly, tetramer of two alpha and two beta subunits.

It localises to the cytoplasm. It carries out the reaction tRNA(Gly) + glycine + ATP = glycyl-tRNA(Gly) + AMP + diphosphate. The sequence is that of Glycine--tRNA ligase beta subunit from Neisseria gonorrhoeae (strain NCCP11945).